The following is a 212-amino-acid chain: Pyridoxine/pyridoxamine 5'-phosphate oxidase 1 (212 aa).

Residues 8 to 11 (RTDY) and Lys66 each bind substrate. FMN contacts are provided by residues 61 to 66 (RIVLLK), 76 to 77 (FT), Lys83, and Gln105. Tyr123, Arg127, and Ser131 together coordinate substrate. FMN-binding positions include 140–141 (QS) and Trp184. Position 190–192 (190–192 (RLH)) interacts with substrate. Residue Arg194 coordinates FMN.

It belongs to the pyridoxamine 5'-phosphate oxidase family. As to quaternary structure, homodimer. The cofactor is FMN.

It catalyses the reaction pyridoxamine 5'-phosphate + O2 + H2O = pyridoxal 5'-phosphate + H2O2 + NH4(+). The catalysed reaction is pyridoxine 5'-phosphate + O2 = pyridoxal 5'-phosphate + H2O2. Its pathway is cofactor metabolism; pyridoxal 5'-phosphate salvage; pyridoxal 5'-phosphate from pyridoxamine 5'-phosphate: step 1/1. It functions in the pathway cofactor metabolism; pyridoxal 5'-phosphate salvage; pyridoxal 5'-phosphate from pyridoxine 5'-phosphate: step 1/1. Functionally, catalyzes the oxidation of either pyridoxine 5'-phosphate (PNP) or pyridoxamine 5'-phosphate (PMP) into pyridoxal 5'-phosphate (PLP). In Ralstonia nicotianae (strain ATCC BAA-1114 / GMI1000) (Ralstonia solanacearum), this protein is Pyridoxine/pyridoxamine 5'-phosphate oxidase 1.